Here is a 376-residue protein sequence, read N- to C-terminus: Multiphosphoryl transfer protein (376 aa).

In terms of domain architecture, PTS EIIA type-2 spans 2–142 (FQLSVQDIHP…EELRALLMGE (141 aa)). His-62 acts as the Tele-phosphohistidine intermediate; for EIIA activity in catalysis. His-62 carries the phosphohistidine; by HPr modification. A m domain region spans residues 156–284 (TLDVIASSLV…LTSDDALTDD (129 aa)). The 91-residue stretch at 285-375 (VLSAEFVVRN…DAIAAGLGEG (91 aa)) folds into the HPr domain. The active-site Pros-phosphohistidine intermediate; for HPr activity is His-299. His-299 is modified (phosphohistidine; by EI).

It localises to the cytoplasm. In terms of biological role, the phosphoenolpyruvate-dependent sugar phosphotransferase system (sugar PTS), a major carbohydrate active transport system, catalyzes the phosphorylation of incoming sugar substrates concomitantly with their translocation across the cell membrane. The enzyme II FruAB PTS system is involved in fructose transport. The protein is Multiphosphoryl transfer protein (fruB) of Salmonella typhimurium (strain LT2 / SGSC1412 / ATCC 700720).